A 252-amino-acid polypeptide reads, in one-letter code: Flagellar brake protein YcgR (252 aa).

The 119-residue stretch at 118-236 (QRREYFRVSI…EKGLQRAIFE (119 aa)) folds into the PilZ domain.

The protein belongs to the YcgR family. In terms of assembly, monomer. Interacts with the flagellar basal bodies.

It localises to the bacterial flagellum basal body. Acts as a flagellar brake, regulating swimming and swarming in a bis-(3'-5') cyclic diguanylic acid (c-di-GMP)-dependent manner. Binds 1 c-di-GMP dimer per subunit. Increasing levels of c-di-GMP lead to decreased motility. This Yersinia pseudotuberculosis serotype I (strain IP32953) protein is Flagellar brake protein YcgR.